A 107-amino-acid chain; its full sequence is Metallothionein-1 (107 aa).

This sequence belongs to the metallothionein superfamily. Type 7 family.

Functionally, the metallothioneins are involved in the cellular sequestration of toxic metal ions. Binds 12 cadmium ions per molecule. The sequence is that of Metallothionein-1 from Tetrahymena thermophila.